Reading from the N-terminus, the 495-residue chain is Leucine aminopeptidase 2 (495 aa).

The first 21 residues, 1 to 21 (MKSQLLSLAVAVSTISQGVVG), serve as a signal peptide directing secretion. One can recognise a PA domain in the interval 124–218 (PPANKIMAEL…EDGKNLASLV (95 aa)). Residues N142 and N235 are each glycosylated (N-linked (GlcNAc...) asparagine). Positions 259 and 271 each coordinate Zn(2+). Residue N272 is glycosylated (N-linked (GlcNAc...) asparagine). The Proton acceptor role is filled by E303. The Zn(2+) site is built by E304 and D332. N-linked (GlcNAc...) asparagine glycosylation is present at N352. H430 lines the Zn(2+) pocket.

The protein belongs to the peptidase M28 family. M28A subfamily. In terms of assembly, monomer. Requires Zn(2+) as cofactor.

The protein resides in the secreted. In terms of biological role, extracellular aminopeptidase that releases a wide variety of amino acids from natural peptides and contributes to pathogenicity. The chain is Leucine aminopeptidase 2 (LAP2) from Trichophyton tonsurans (Scalp ringworm fungus).